The following is a 255-amino-acid chain: Diphthine synthase (255 aa).

S-adenosyl-L-methionine-binding positions include leucine 9, aspartate 85, valine 88, serine 113–isoleucine 114, leucine 164, alanine 207, and histidine 232.

It belongs to the diphthine synthase family. Homodimer.

It carries out the reaction 2-[(3S)-amino-3-carboxypropyl]-L-histidyl-[translation elongation factor 2] + 3 S-adenosyl-L-methionine = diphthine-[translation elongation factor 2] + 3 S-adenosyl-L-homocysteine + 3 H(+). The protein operates within protein modification; peptidyl-diphthamide biosynthesis. In terms of biological role, S-adenosyl-L-methionine-dependent methyltransferase that catalyzes the trimethylation of the amino group of the modified target histidine residue in translation elongation factor 2 (EF-2), to form an intermediate called diphthine. The three successive methylation reactions represent the second step of diphthamide biosynthesis. This chain is Diphthine synthase, found in Methanococcus maripaludis (strain C6 / ATCC BAA-1332).